The chain runs to 177 residues: Bifunctional protein PyrR (177 aa).

The PRPP-binding motif lies at 101–113 (IILIDDVLYTGRT).

Belongs to the purine/pyrimidine phosphoribosyltransferase family. PyrR subfamily.

It catalyses the reaction UMP + diphosphate = 5-phospho-alpha-D-ribose 1-diphosphate + uracil. Its function is as follows. Regulates the transcription of the pyrimidine nucleotide (pyr) operon in response to exogenous pyrimidines. In terms of biological role, also displays a weak uracil phosphoribosyltransferase activity which is not physiologically significant. This Endomicrobium trichonymphae protein is Bifunctional protein PyrR.